The primary structure comprises 317 residues: Thymidylate synthase (317 aa).

DUMP is bound by residues arginine 24 and 179-180; that span reads RR. Cysteine 199 acts as the Nucleophile in catalysis. DUMP contacts are provided by residues 219-222, asparagine 230, and 260-262; these read RSAD and HIY. Residue aspartate 222 coordinates (6R)-5,10-methylene-5,6,7,8-tetrahydrofolate. (6R)-5,10-methylene-5,6,7,8-tetrahydrofolate is bound at residue alanine 316.

The protein belongs to the thymidylate synthase family. Bacterial-type ThyA subfamily. Homodimer.

It is found in the cytoplasm. The enzyme catalyses dUMP + (6R)-5,10-methylene-5,6,7,8-tetrahydrofolate = 7,8-dihydrofolate + dTMP. Its pathway is pyrimidine metabolism; dTTP biosynthesis. Functionally, catalyzes the reductive methylation of 2'-deoxyuridine-5'-monophosphate (dUMP) to 2'-deoxythymidine-5'-monophosphate (dTMP) while utilizing 5,10-methylenetetrahydrofolate (mTHF) as the methyl donor and reductant in the reaction, yielding dihydrofolate (DHF) as a by-product. This enzymatic reaction provides an intracellular de novo source of dTMP, an essential precursor for DNA biosynthesis. This chain is Thymidylate synthase, found in Oceanobacillus iheyensis (strain DSM 14371 / CIP 107618 / JCM 11309 / KCTC 3954 / HTE831).